We begin with the raw amino-acid sequence, 247 residues long: Membrane-spanning 4-domains subfamily A member 6D (247 aa).

At 1 to 46 (MIPQVVTSETVTVISPNGISFPQTDKPQPSHQSQDSLKKHLKAEIK) the chain is on the cytoplasmic side. The helical transmembrane segment at 47–67 (VMAAIQIMCAVMVLSLGIILA) threads the bilayer. The Extracellular portion of the chain corresponds to 68-80 (SVPSNLHFTSVFS). Residues 81-101 (ILLESGYPFVGALFFAISGIL) traverse the membrane as a helical segment. Topologically, residues 102–121 (SIVTEKKMTKPLVHSSLALS) are cytoplasmic. A helical transmembrane segment spans residues 122–142 (ILSVLSALTGIAILSVSLAAL). At 143 to 180 (EPALQQCKLAFTQLDTTQDAYHFFSPEPLNSCFVAKAA) the chain is on the extracellular side. Residues 181 to 201 (LTGVFSLMLISSVLELGLAVL) traverse the membrane as a helical segment. The Cytoplasmic portion of the chain corresponds to 202-247 (TATLWWKQSSSAFSGNVIFLSQNSKNKSSVSSESLCNPTYENILTS). Ser-235 is subject to Phosphoserine.

The protein belongs to the MS4A family. In terms of tissue distribution, expressed in thymus, spleen, intestine, colon, testis, heart, liver, brain, kidney, peripheral lymph node and bone marrow.

Its subcellular location is the membrane. In terms of biological role, may be involved in signal transduction as a component of a multimeric receptor complex. The polypeptide is Membrane-spanning 4-domains subfamily A member 6D (Ms4a6d) (Mus musculus (Mouse)).